Reading from the N-terminus, the 530-residue chain is Type 2 DNA topoisomerase 6 subunit B (530 aa).

ATP-binding positions include Asn-42, Asp-76, 96-98, 107-113, and Lys-427; these read SSK and MYGLGVK.

Belongs to the TOP6B family. As to quaternary structure, homodimer. Heterotetramer of two Top6A and two Top6B chains.

It catalyses the reaction ATP-dependent breakage, passage and rejoining of double-stranded DNA.. With respect to regulation, not inhibited by the DNA gyrase inhibitor novobiocin, instead inhibited by eukaryotic topoisomerase inhibitors such as m- and o-amsacrine, ellipticine, and the quinolone CP-115,953. Radicicol inhibits the ATPase activity. Its function is as follows. Relaxes both positive and negative supercoils and exhibits a strong decatenase and unknotting activity; it cannot introduce DNA supercoils. ATP is absolutely required for DNA cleavage; the nonhydrolyzable analog AMP-PNP generates nicked or linear products from a supercoiled dsDNA substrate. Generates staggered two-nucleotide long 5' overhangs. The enzyme is covalently attached transiently to the 5'-ends of the cleaved strands. This Saccharolobus shibatae (strain ATCC 51178 / DSM 5389 / JCM 8931 / NBRC 15437 / B12) (Sulfolobus shibatae) protein is Type 2 DNA topoisomerase 6 subunit B.